We begin with the raw amino-acid sequence, 172 residues long: Shikimate kinase (172 aa).

11 to 16 (GAGKST) lines the ATP pocket. A Mg(2+)-binding site is contributed by serine 15. Substrate contacts are provided by aspartate 33, arginine 57, and glycine 79. Arginine 117 provides a ligand contact to ATP. Residue arginine 136 coordinates substrate. Arginine 153 contacts ATP.

It belongs to the shikimate kinase family. As to quaternary structure, monomer. The cofactor is Mg(2+).

Its subcellular location is the cytoplasm. It catalyses the reaction shikimate + ATP = 3-phosphoshikimate + ADP + H(+). Its pathway is metabolic intermediate biosynthesis; chorismate biosynthesis; chorismate from D-erythrose 4-phosphate and phosphoenolpyruvate: step 5/7. Its function is as follows. Catalyzes the specific phosphorylation of the 3-hydroxyl group of shikimic acid using ATP as a cosubstrate. In Pseudomonas fluorescens (strain Pf0-1), this protein is Shikimate kinase.